Reading from the N-terminus, the 141-residue chain is MLDGRIMGLDVGDKTIGVAVSDLMGLTAQGVKTIKRVGKKKDIEELKAIIKEKQVNKIVSGLPKNMNGTLGPQGEKVIKFCELVKAETGIDVEFWDERLSTVAAERSLLEADVSRQKRKKVIDMLAAVIILQGYLDFKINS.

The protein belongs to the YqgF nuclease family.

It localises to the cytoplasm. Could be a nuclease involved in processing of the 5'-end of pre-16S rRNA. The sequence is that of Putative pre-16S rRNA nuclease from Clostridioides difficile (strain 630) (Peptoclostridium difficile).